Consider the following 258-residue polypeptide: MGLSGKNVIFVGGLGFIGYEACKQLMAKNMASFFVFDVLDKPEDIKALQALNPKTKVYYTKFDITSKQSIKSALADVVSKVKYIDALINGAGILTDLNVELTMNINLIGLINTTLEGLPLMDKNKQGRGGVIVNIASVLGLEPCPPAAAYCASKFGVMGFSRSIGDPYYYNITGVAVVTFCPGLTETPLKNNIGSKYTFEYSKKISEELNNTKTQKPEVCGAHLAQVVESHENGGIYISNQGTLAKVTPTVYWQPTYH.

Residue 9 to 33 (IFVGGLGFIGYEACKQLMAKNMASF) coordinates NAD(+). Ser-137 provides a ligand contact to substrate. The active-site Proton acceptor is Tyr-150.

This sequence belongs to the short-chain dehydrogenases/reductases (SDR) family. As to quaternary structure, homodimer.

It carries out the reaction a primary alcohol + NAD(+) = an aldehyde + NADH + H(+). The enzyme catalyses a secondary alcohol + NAD(+) = a ketone + NADH + H(+). This Ceratitis rosa (Natal fruit fly) protein is Alcohol dehydrogenase 2 (ADH2).